Consider the following 258-residue polypeptide: DNA repair protein RecO (258 aa).

Belongs to the RecO family.

Functionally, involved in DNA repair and RecF pathway recombination. The polypeptide is DNA repair protein RecO (Syntrophotalea carbinolica (strain DSM 2380 / NBRC 103641 / GraBd1) (Pelobacter carbinolicus)).